The primary structure comprises 730 residues: Ribosomal RNA large subunit methyltransferase K/L (730 aa).

In terms of domain architecture, THUMP spans 46–157 (TAYRLCVWSR…RGEAILSLDL (112 aa)). The disordered stretch occupies residues 394–418 (GERREAQPEGTEARQQVPQASEPAR).

This sequence belongs to the methyltransferase superfamily. RlmKL family.

The protein resides in the cytoplasm. It carries out the reaction guanosine(2445) in 23S rRNA + S-adenosyl-L-methionine = N(2)-methylguanosine(2445) in 23S rRNA + S-adenosyl-L-homocysteine + H(+). It catalyses the reaction guanosine(2069) in 23S rRNA + S-adenosyl-L-methionine = N(2)-methylguanosine(2069) in 23S rRNA + S-adenosyl-L-homocysteine + H(+). Its function is as follows. Specifically methylates the guanine in position 2445 (m2G2445) and the guanine in position 2069 (m7G2069) of 23S rRNA. The sequence is that of Ribosomal RNA large subunit methyltransferase K/L from Pseudomonas putida (strain ATCC 700007 / DSM 6899 / JCM 31910 / BCRC 17059 / LMG 24140 / F1).